Consider the following 169-residue polypeptide: Protein-export protein SecB (169 aa).

It belongs to the SecB family. Homotetramer, a dimer of dimers. One homotetramer interacts with 1 SecA dimer.

It localises to the cytoplasm. Functionally, one of the proteins required for the normal export of preproteins out of the cell cytoplasm. It is a molecular chaperone that binds to a subset of precursor proteins, maintaining them in a translocation-competent state. It also specifically binds to its receptor SecA. This Mannheimia succiniciproducens (strain KCTC 0769BP / MBEL55E) protein is Protein-export protein SecB.